A 119-amino-acid polypeptide reads, in one-letter code: Chymotrypsin inhibitor WCI (119 aa).

5 disulfides stabilise this stretch: Cys-6/Cys-55, Cys-20/Cys-44, Cys-29/Cys-87, Cys-45/Cys-105, and Cys-57/Cys-116.

It is found in the secreted. Inhibits bovine, insect and wheat chymotrypsins. Inhibits bovine chymotrypsin with Ki of 0.6 nM. Does not inhibit human or wheat alpha-amylases, bovine pancreatic trypsin, or trypsin-like activity isolated from wheat. The sequence is that of Chymotrypsin inhibitor WCI from Triticum aestivum (Wheat).